The sequence spans 193 residues: NADH-quinone oxidoreductase subunit B (193 aa).

A disordered region spans residues 1–25; the sequence is MGLNDSSGTLVAPKPKGIIDPNTGR. C72, C73, C137, and C167 together coordinate [4Fe-4S] cluster.

It belongs to the complex I 20 kDa subunit family. In terms of assembly, NDH-1 is composed of 14 different subunits. Subunits NuoB, C, D, E, F, and G constitute the peripheral sector of the complex. [4Fe-4S] cluster serves as cofactor.

The protein resides in the cell inner membrane. The catalysed reaction is a quinone + NADH + 5 H(+)(in) = a quinol + NAD(+) + 4 H(+)(out). NDH-1 shuttles electrons from NADH, via FMN and iron-sulfur (Fe-S) centers, to quinones in the respiratory chain. Couples the redox reaction to proton translocation (for every two electrons transferred, four hydrogen ions are translocated across the cytoplasmic membrane), and thus conserves the redox energy in a proton gradient. This chain is NADH-quinone oxidoreductase subunit B, found in Mesorhizobium japonicum (strain LMG 29417 / CECT 9101 / MAFF 303099) (Mesorhizobium loti (strain MAFF 303099)).